Reading from the N-terminus, the 163-residue chain is Urease accessory protein UreE (163 aa).

Positions 144-163 (QPEPGAYGGSSAGSHDGHHH) are disordered.

Belongs to the UreE family.

It is found in the cytoplasm. Involved in urease metallocenter assembly. Binds nickel. Probably functions as a nickel donor during metallocenter assembly. In Aliivibrio fischeri (strain MJ11) (Vibrio fischeri), this protein is Urease accessory protein UreE.